The primary structure comprises 82 residues: Leucinostatins biosynthesis cluster protein M (82 aa).

Residues 34 to 82 (ARNETHDPSGPRAPVSSMRLGPRSRPYHHGTARLRGSPNCSRDSSSAAT) are disordered. Positions 71–82 (PNCSRDSSSAAT) are enriched in polar residues.

In terms of biological role, part of the gene cluster that mediates the biosynthesis of the lipopeptide antibiotics leucinostatins that show extensive biological activities, including antimalarial, antiviral, antibacterial, antifungal, and antitumor activities, as well as phytotoxic. The function of lcsM within the leucinostatins biosynthesis has not been identified yet. The polypeptide is Leucinostatins biosynthesis cluster protein M (Purpureocillium lilacinum (Paecilomyces lilacinus)).